The primary structure comprises 386 residues: S-adenosylmethionine synthase (386 aa).

E8 is a Mg(2+) binding site. H14 lines the ATP pocket. E42 lines the K(+) pocket. The L-methionine site is built by E55 and Q98. ATP is bound by residues 166–168 (DGK), 234–237 (SGRF), D245, 251–252 (RK), A268, K272, and K276. L-methionine is bound at residue D245. Residue K276 coordinates L-methionine.

Belongs to the AdoMet synthase family. Homotetramer. Requires Mn(2+) as cofactor. It depends on Mg(2+) as a cofactor. The cofactor is Co(2+). K(+) is required as a cofactor.

The protein localises to the cytoplasm. It carries out the reaction L-methionine + ATP + H2O = S-adenosyl-L-methionine + phosphate + diphosphate. It participates in amino-acid biosynthesis; S-adenosyl-L-methionine biosynthesis; S-adenosyl-L-methionine from L-methionine: step 1/1. Catalyzes the formation of S-adenosylmethionine from methionine and ATP. The reaction comprises two steps that are both catalyzed by the same enzyme: formation of S-adenosylmethionine (AdoMet) and triphosphate, and subsequent hydrolysis of the triphosphate. This Ostreococcus tauri protein is S-adenosylmethionine synthase (METK).